The primary structure comprises 251 residues: Small ribosomal subunit protein uS3 (251 aa).

One can recognise a KH type-2 domain in the interval 39 to 109; sequence IRNYVQARLK…EVKIDVIEVI (71 aa). Basic and acidic residues predominate over residues 222–239; it reads LKKIKDRRGEQRSRGRDS. The disordered stretch occupies residues 222-251; that stretch reads LKKIKDRRGEQRSRGRDSRNRRRRKPRQTT. Residues 240–251 are compositionally biased toward basic residues; it reads RNRRRRKPRQTT.

Belongs to the universal ribosomal protein uS3 family. Part of the 30S ribosomal subunit. Forms a tight complex with proteins S10 and S14.

Binds the lower part of the 30S subunit head. Binds mRNA in the 70S ribosome, positioning it for translation. This chain is Small ribosomal subunit protein uS3, found in Prosthecochloris aestuarii (strain DSM 271 / SK 413).